The following is a 175-amino-acid chain: Sec-independent protein translocase protein TatB (175 aa).

Residues 1-21 form a helical membrane-spanning segment; sequence MLDLGLSKMALIGVVALVVLG. Disordered regions lie at residues 96–115 and 153–175; these read VSPG…AASG and VQSG…ARFL. Residues 160–175 show a composition bias toward basic residues; it reads VARHRPASLRRPARFL.

This sequence belongs to the TatB family. The Tat system comprises two distinct complexes: a TatABC complex, containing multiple copies of TatA, TatB and TatC subunits, and a separate TatA complex, containing only TatA subunits. Substrates initially bind to the TatABC complex, which probably triggers association of the separate TatA complex to form the active translocon.

It is found in the cell inner membrane. Its function is as follows. Part of the twin-arginine translocation (Tat) system that transports large folded proteins containing a characteristic twin-arginine motif in their signal peptide across membranes. Together with TatC, TatB is part of a receptor directly interacting with Tat signal peptides. TatB may form an oligomeric binding site that transiently accommodates folded Tat precursor proteins before their translocation. This Burkholderia mallei (strain ATCC 23344) protein is Sec-independent protein translocase protein TatB.